A 271-amino-acid chain; its full sequence is Orotidine 5'-phosphate decarboxylase (271 aa).

Lysine 97 serves as the catalytic Proton donor.

The protein belongs to the OMP decarboxylase family. Type 2 subfamily.

The enzyme catalyses orotidine 5'-phosphate + H(+) = UMP + CO2. Its pathway is pyrimidine metabolism; UMP biosynthesis via de novo pathway; UMP from orotate: step 2/2. This Leptospira borgpetersenii serovar Hardjo-bovis (strain L550) protein is Orotidine 5'-phosphate decarboxylase.